The primary structure comprises 486 residues: Glutamyl-tRNA(Gln) amidotransferase subunit A (486 aa).

Catalysis depends on charge relay system residues Lys-76 and Ser-151. Ser-175 serves as the catalytic Acyl-ester intermediate.

Belongs to the amidase family. GatA subfamily. As to quaternary structure, heterotrimer of A, B and C subunits.

It carries out the reaction L-glutamyl-tRNA(Gln) + L-glutamine + ATP + H2O = L-glutaminyl-tRNA(Gln) + L-glutamate + ADP + phosphate + H(+). Its function is as follows. Allows the formation of correctly charged Gln-tRNA(Gln) through the transamidation of misacylated Glu-tRNA(Gln) in organisms which lack glutaminyl-tRNA synthetase. The reaction takes place in the presence of glutamine and ATP through an activated gamma-phospho-Glu-tRNA(Gln). In Marinomonas sp. (strain MWYL1), this protein is Glutamyl-tRNA(Gln) amidotransferase subunit A.